The sequence spans 152 residues: Desiccation protectant protein Lea14 homolog (152 aa).

Belongs to the LEA type 2 family.

The protein is Desiccation protectant protein Lea14 homolog of Glycine max (Soybean).